The chain runs to 238 residues: MSDSTKPSLPSASIGNIHIDPTGFVKLGAQLPTLANILAQAIDELGITLSAQQQRTLLLYLDQLLLWNKAYNLTAITDPVEALIKHVIDCLAIITHLPSGSLLDIGTGAGLPAVIIAICQPERSCTALDSNQKKIRFIKQISSELGLSNMQPIASRIEAHEVSYDVVTSRAFASLIDFVEVAQPRLADNGYLCAMKGKAPSEEERHVLGNDWQFKTIKLNVPRLHDSRHLIELSYKNV.

Residues Gly-106, Leu-111, 157-158 (IE), and Arg-170 contribute to the S-adenosyl-L-methionine site.

Belongs to the methyltransferase superfamily. RNA methyltransferase RsmG family.

The protein resides in the cytoplasm. The enzyme catalyses guanosine(527) in 16S rRNA + S-adenosyl-L-methionine = N(7)-methylguanosine(527) in 16S rRNA + S-adenosyl-L-homocysteine. Functionally, specifically methylates the N7 position of guanine in position 527 of 16S rRNA. This Psychrobacter arcticus (strain DSM 17307 / VKM B-2377 / 273-4) protein is Ribosomal RNA small subunit methyltransferase G.